The sequence spans 98 residues: MDLIIKEKRDNPILKRKEIKYVLKFDSSRTPSREEIKELIAKHEGVDKELVIVDNNKQLTGKHEIEGYTKIYADKPSAMLYEPDYELIRNGLKQKEAK.

This sequence belongs to the eukaryotic ribosomal protein eS24 family.

The chain is Small ribosomal subunit protein eS24 (rps2e) from Thermoplasma acidophilum (strain ATCC 25905 / DSM 1728 / JCM 9062 / NBRC 15155 / AMRC-C165).